The following is a 244-amino-acid chain: Aliphatic sulfonates import ATP-binding protein SsuB 2 (244 aa).

The region spanning 13–229 (VQVRSLVRGF…ALGDSKFHEF (217 aa)) is the ABC transporter domain. 45–52 (GKSGSGKS) contributes to the ATP binding site.

The protein belongs to the ABC transporter superfamily. Aliphatic sulfonates importer (TC 3.A.1.17.2) family. In terms of assembly, the complex is composed of two ATP-binding proteins (SsuB), two transmembrane proteins (SsuC) and a solute-binding protein (SsuA).

Its subcellular location is the cell membrane. The enzyme catalyses ATP + H2O + aliphatic sulfonate-[sulfonate-binding protein]Side 1 = ADP + phosphate + aliphatic sulfonateSide 2 + [sulfonate-binding protein]Side 1.. Its function is as follows. Part of the ABC transporter complex SsuABC involved in aliphatic sulfonates import. Responsible for energy coupling to the transport system. The sequence is that of Aliphatic sulfonates import ATP-binding protein SsuB 2 from Rhodococcus jostii (strain RHA1).